A 270-amino-acid chain; its full sequence is MSRIALGLAYDGSAWQGWQTQPHGVTVQDQVEAALASFAGGGGPVATVCAGRTDTGVHAAMQVIHLDTDLQRRDESWVRGVNAFLPPSIVVQWARPVSEAFHARFSARSRTYVYLLWRGRVRPALWAGRAGWAFQPLDVPAMRAAARTLLGEHDFSSFRSSQCQARHPVRTLHRLDIDERGAFLVFTLRANAFLHHMVRNLIGALLQVGQGRESVAWMDALLRARDRRLGAPTFMPDGLYLSAIEYPAEFGFDELDGGTMLLSPFTGALG.

The Nucleophile role is filled by aspartate 54. Tyrosine 112 contacts substrate.

The protein belongs to the tRNA pseudouridine synthase TruA family. As to quaternary structure, homodimer.

The catalysed reaction is uridine(38/39/40) in tRNA = pseudouridine(38/39/40) in tRNA. In terms of biological role, formation of pseudouridine at positions 38, 39 and 40 in the anticodon stem and loop of transfer RNAs. This is tRNA pseudouridine synthase A from Bordetella bronchiseptica (strain ATCC BAA-588 / NCTC 13252 / RB50) (Alcaligenes bronchisepticus).